The chain runs to 140 residues: Large ribosomal subunit protein uL11 (140 aa).

This sequence belongs to the universal ribosomal protein uL11 family. As to quaternary structure, part of the ribosomal stalk of the 50S ribosomal subunit. Interacts with L10 and the large rRNA to form the base of the stalk. L10 forms an elongated spine to which L12 dimers bind in a sequential fashion forming a multimeric L10(L12)X complex. In terms of processing, one or more lysine residues are methylated.

Its function is as follows. Forms part of the ribosomal stalk which helps the ribosome interact with GTP-bound translation factors. The chain is Large ribosomal subunit protein uL11 from Dehalococcoides mccartyi (strain CBDB1).